The following is a 635-amino-acid chain: Biosynthetic arginine decarboxylase (635 aa).

Lys-100 is subject to N6-(pyridoxal phosphate)lysine. 282 to 292 (VDIGGGLGVDY) lines the substrate pocket.

The protein belongs to the Orn/Lys/Arg decarboxylase class-II family. SpeA subfamily. The cofactor is Mg(2+). Pyridoxal 5'-phosphate serves as cofactor.

It carries out the reaction L-arginine + H(+) = agmatine + CO2. It functions in the pathway amine and polyamine biosynthesis; agmatine biosynthesis; agmatine from L-arginine: step 1/1. Its function is as follows. Catalyzes the biosynthesis of agmatine from arginine. The sequence is that of Biosynthetic arginine decarboxylase from Geobacter metallireducens (strain ATCC 53774 / DSM 7210 / GS-15).